The sequence spans 1229 residues: ABC transporter B family member 22 (1229 aa).

The next 6 helical transmembrane spans lie at 22 to 42, 69 to 89, 145 to 167, 171 to 193, 251 to 271, and 274 to 294; these read MGLG…IFFI, VALL…GYCW, LPNF…IMLW, IVGF…ALIN, GIAI…TWYG, and MVMY…CITY. An ABC transmembrane type-1 1 domain is found at 22-311; sequence MGLGLIGAVG…GLSNLKYFSE (290 aa). One can recognise an ABC transporter 1 domain in the interval 346–582; that stretch reads VQFKHVKFMY…VDGQYTSLVR (237 aa). 381–388 is an ATP binding site; sequence GGSGSGKS. Residues asparagine 529 and asparagine 594 are each glycosylated (N-linked (GlcNAc...) asparagine). 2 consecutive transmembrane segments (helical) span residues 661–681 and 703–723; these read ALYG…YAYA and IYVL…IIQQ. The ABC transmembrane type-1 2 domain maps to 661 to 949; it reads ALYGCLSAVL…AGAMTMDLAK (289 aa). The N-linked (GlcNAc...) asparagine glycan is linked to asparagine 758. The next 4 helical transmembrane spans lie at 782–800, 807–823, 885–908, and 923–943; these read VSLL…TLGL, SIVM…CFYT, WLAG…NYWY, and FFEL…AGAM. Residues 984-1222 enclose the ABC transporter 2 domain; the sequence is IKFVNVDFAY…GPTGVYFSLV (239 aa). An N-linked (GlcNAc...) asparagine glycan is attached at asparagine 1004. 1019 to 1026 lines the ATP pocket; it reads GPSGSGKS. The N-linked (GlcNAc...) asparagine glycan is linked to asparagine 1157.

This sequence belongs to the ABC transporter superfamily. ABCB family. Multidrug resistance exporter (TC 3.A.1.201) subfamily.

The protein localises to the membrane. This chain is ABC transporter B family member 22 (ABCB22), found in Arabidopsis thaliana (Mouse-ear cress).